The primary structure comprises 195 residues: Imidazoleglycerol-phosphate dehydratase (195 aa).

It belongs to the imidazoleglycerol-phosphate dehydratase family.

The protein resides in the cytoplasm. It carries out the reaction D-erythro-1-(imidazol-4-yl)glycerol 3-phosphate = 3-(imidazol-4-yl)-2-oxopropyl phosphate + H2O. The protein operates within amino-acid biosynthesis; L-histidine biosynthesis; L-histidine from 5-phospho-alpha-D-ribose 1-diphosphate: step 6/9. This chain is Imidazoleglycerol-phosphate dehydratase, found in Burkholderia multivorans (strain ATCC 17616 / 249).